Reading from the N-terminus, the 493-residue chain is Probable GTP-binding protein OBGM, mitochondrial (493 aa).

The N-terminal 28 residues, 1 to 28 (MWLIRAIVPVRYLGSYKRPQKPPWMRNP), are a transit peptide targeting the mitochondrion. In terms of domain architecture, Obg spans 48-303 (TRMRDRFTLY…AVLILELKSI (256 aa)). Disordered stretches follow at residues 65–89 (SGCS…GGRG) and 146–215 (GEIP…EDDD). Over residues 187–196 (SESDQDDTEQ) the composition is skewed to acidic residues. The OBG-type G domain maps to 304–476 (ADVGLVGMPN…LKDGLKMLVD (173 aa)). GTP contacts are provided by residues 310 to 317 (GMPNAGKS) and 356 to 360 (DIPGL).

The protein belongs to the TRAFAC class OBG-HflX-like GTPase superfamily. OBG GTPase family.

Its subcellular location is the mitochondrion. Its function is as follows. May bind GTP and have GTPase activity. The protein is Probable GTP-binding protein OBGM, mitochondrial (ATOBGM) of Arabidopsis thaliana (Mouse-ear cress).